A 151-amino-acid chain; its full sequence is Ribonuclease H (151 aa).

One can recognise an RNase H type-1 domain in the interval 5 to 146 (ALPHVTIFTD…ADQLAREGVA (142 aa)). Residues Asp-14, Glu-52, Asp-74, and Asp-138 each coordinate Mg(2+).

This sequence belongs to the RNase H family. Monomer. Requires Mg(2+) as cofactor.

The protein localises to the cytoplasm. It catalyses the reaction Endonucleolytic cleavage to 5'-phosphomonoester.. Its function is as follows. Endonuclease that specifically degrades the RNA of RNA-DNA hybrids. This Nitrobacter hamburgensis (strain DSM 10229 / NCIMB 13809 / X14) protein is Ribonuclease H.